We begin with the raw amino-acid sequence, 543 residues long: Reticulophagy regulator 2 (543 aa).

Transmembrane regions (helical) follow at residues 12 to 32 (AGGG…SLGM), 100 to 120 (SLRP…LDLW), and 204 to 224 (VPGI…PLVV). Residues 254-265 (LHHKHDKRKRQG) show a composition bias toward basic residues. The tract at residues 254–287 (LHHKHDKRKRQGKNAPPGGDEPLAETESESEAEL) is disordered. Residues 275–285 (PLAETESESEA) are compositionally biased toward acidic residues. Thr279 is subject to Phosphothreonine. Ser281, Ser283, Ser291, and Ser311 each carry phosphoserine. At Thr334 the chain carries Phosphothreonine. 2 disordered regions span residues 336-394 (VSED…DVAA) and 411-486 (HFNG…EEEA). Residues Ser337, Ser344, Ser347, and Ser385 each carry the phosphoserine modification. The segment covering 461–480 (APSPSILPPVPQDSPQPLPA) has biased composition (pro residues). The short motif at 490–495 (EDFELL) is the LIR motif element. The segment at 504-543 (NAELGLEPETPPKPPDAPPLGPDIHSLVQSDQEAQAVAEP) is disordered. Over residues 512-524 (ETPPKPPDAPPLG) the composition is skewed to pro residues.

Belongs to the RETREG family. As to quaternary structure, interacts with ATG8 family modifier proteins MAP1LC3A, MAP1LC3B, MAP1LC3C, GABARAP, GABARAPL1 and GABARAPL2. Shows higher affinity for GABARAPL1 than for MAP1LC3B. Interacts with CANX.

It is found in the endoplasmic reticulum membrane. Its function is as follows. Endoplasmic reticulum (ER)-anchored autophagy regulator which exists in an inactive state under basal conditions but is activated following cellular stress. When activated, induces ER fragmentation and mediates ER delivery into lysosomes through sequestration into autophagosomes via interaction with ATG8 family proteins. Required for collagen quality control in a LIR motif-independent manner. In Homo sapiens (Human), this protein is Reticulophagy regulator 2.